Consider the following 175-residue polypeptide: MTSNKDKNKKANEILYAFSIIGIIPLMAILILRINDPYSQVLYYLYNKVAFLPSITSLHDPVMTTLMSNYNKTAPVMGILVFLCTYKTREIIKPVTRKLVVQSCFWGPVFYAILIYITLFYNLELTTAGGFFKLLSHNVITLFILYCSIYFTVLTMTYAILLMPLLVIKYFKGRQ.

The next 3 membrane-spanning stretches (helical) occupy residues 14 to 32, 104 to 121, and 149 to 168; these read ILYA…ILIL, CFWG…TLFY, and IYFT…LLVI.

Its subcellular location is the cell inner membrane. Functionally, this protein is able to protect a cell, which harbors the plasmid ColB encoding colicin B, against colicin B. This is Colicin-B immunity protein (cbi) from Escherichia coli.